Consider the following 283-residue polypeptide: Gap junction beta-1 protein (283 aa).

Residues 1 to 22 lie on the Cytoplasmic side of the membrane; sequence MNWTGLYTLLSGVNRHSTAIGR. A helical transmembrane segment spans residues 23–45; the sequence is VWLSVIFIFRIMVLVVAAESVWG. The Extracellular segment spans residues 46-75; sequence DEKSSFICNTLQPGCNSVCYDHFFPISHVR. The helical transmembrane segment at 76-95 threads the bilayer; that stretch reads LWSLQLILVSTPALLVAMHV. At 96–130 the chain is on the cytoplasmic side; it reads AHQQHIEKKMLRLEGHGDPIHLEEVKRHKVHISGT. The chain crosses the membrane as a helical span at residues 131-153; it reads LWWTYVISVVFRLLFEAAFMYVF. The Extracellular segment spans residues 154–191; the sequence is YLLYPGYAMVRLVKCDAYPCPNTVDCFVSRPTEKTVFT. Residues 192–214 form a helical membrane-spanning segment; sequence VFMLAASGICIILNVAEVVYLIV. Over 215-283 the chain is Cytoplasmic; sequence RACARRAQRR…AEKSDRCSAC (69 aa). Phosphoserine occurs at positions 233, 258, 266, and 277.

Belongs to the connexin family. Beta-type (group I) subfamily. A connexon is composed of a hexamer of connexins. Interacts with CNST.

It is found in the cell membrane. Its subcellular location is the cell junction. The protein localises to the gap junction. One gap junction consists of a cluster of closely packed pairs of transmembrane channels, the connexons, through which materials of low MW diffuse from one cell to a neighboring cell. This is Gap junction beta-1 protein (GJB1) from Equus caballus (Horse).